Consider the following 368-residue polypeptide: E3 ubiquitin-protein ligase makorin (368 aa).

C3H1-type zinc fingers lie at residues 2–29 (STKR…HDWN) and 30–57 (DQPN…HVKV). The disordered stretch occupies residues 58–81 (SRNPTVAPPPSSSTTTRASSSLQP). The segment covering 69 to 78 (SSTTTRASSS) has biased composition (low complexity). Residues 147-174 (PADLPICSFAAGGNCPYGEECPQMHGDL) form a C3H1-type 3 zinc finger. The interval 175–202 (CTTCGKMCLHPYRPDEREEHTKLCEKNH) is makorin-type Cys-His. The RING-type zinc finger occupies 216-274 (CSVCLDRVLSKPTAAERKFGLLSECDHPFCISCIRNWRNNSPTSGMDVNSALRACPICR). The C3H1-type 4 zinc-finger motif lies at 303–332 (KLKSIDCKYFDFGTGTCPFGSSCFYKHAYR).

Expressed in primary roots and leaves. Detected in vascular bundle tissues.

It carries out the reaction S-ubiquitinyl-[E2 ubiquitin-conjugating enzyme]-L-cysteine + [acceptor protein]-L-lysine = [E2 ubiquitin-conjugating enzyme]-L-cysteine + N(6)-ubiquitinyl-[acceptor protein]-L-lysine.. The protein operates within protein modification; protein ubiquitination. Functionally, E3 ubiquitin ligase catalyzing the covalent attachment of ubiquitin moieties onto substrate proteins. The sequence is that of E3 ubiquitin-protein ligase makorin (MKRN) from Oryza sativa subsp. japonica (Rice).